The following is a 411-amino-acid chain: Arginine deiminase (411 aa).

The active-site Amidino-cysteine intermediate is Cys401.

The protein belongs to the arginine deiminase family.

It is found in the cytoplasm. It carries out the reaction L-arginine + H2O = L-citrulline + NH4(+). It functions in the pathway amino-acid degradation; L-arginine degradation via ADI pathway; carbamoyl phosphate from L-arginine: step 1/2. The protein is Arginine deiminase of Streptococcus pyogenes serotype M2 (strain MGAS10270).